Reading from the N-terminus, the 555-residue chain is Glutamate--tRNA ligase (555 aa).

The 'HIGH' region motif lies at 100-110 (PNPSGPLHIGH).

The protein belongs to the class-I aminoacyl-tRNA synthetase family. Glutamate--tRNA ligase type 2 subfamily.

Its subcellular location is the cytoplasm. The enzyme catalyses tRNA(Glu) + L-glutamate + ATP = L-glutamyl-tRNA(Glu) + AMP + diphosphate. Its function is as follows. Catalyzes the attachment of glutamate to tRNA(Glu) in a two-step reaction: glutamate is first activated by ATP to form Glu-AMP and then transferred to the acceptor end of tRNA(Glu). The chain is Glutamate--tRNA ligase from Methanococcus maripaludis (strain C7 / ATCC BAA-1331).